The chain runs to 437 residues: F-box/FBD/LRR-repeat protein At5g22700 (437 aa).

The F-box domain maps to 5–51; that stretch reads GDRISSLPDELLCQILSNLPTKNAVTTSILSTRWRSIWLSTPVLDID. LRR repeat units lie at residues 86–113, 134–160, 161–186, 187–210, 215–240, 272–297, and 322–350; these read RDDV…EVDC, SLRL…HLEE, NIYY…TVVR, IVDI…KLVL, GWFI…SLKD, PVTF…TISG, and NARF…VLGL. The 46-residue stretch at 361–406 folds into the FBD domain; that stretch reads RVSSVPPCFLSSLEFVEIRSRLCRKRYVMKVARYFAKNSVMLKKFV.

This is F-box/FBD/LRR-repeat protein At5g22700 from Arabidopsis thaliana (Mouse-ear cress).